We begin with the raw amino-acid sequence, 290 residues long: Dual-specificity RNA pseudouridine synthase RluF (290 aa).

One can recognise an S4 RNA-binding domain in the interval 7–74 (VRLNKYISES…EDLVLIALNK (68 aa)). Interaction with RNA stretches follow at residues 105-108 (RLDK) and 187-190 (RQIR). Catalysis depends on Asp107, which acts as the Nucleophile. Positions 241–290 (SEAKPKAKAKPKTVGIKRPVVKMEKTAEKGGRPASNGKRFTSPGRKKKGR) are disordered. Over residues 261–271 (VKMEKTAEKGG) the composition is skewed to basic and acidic residues.

The protein belongs to the pseudouridine synthase RsuA family. Monomer.

The catalysed reaction is uridine(2604) in 23S rRNA = pseudouridine(2604) in 23S rRNA. It carries out the reaction uridine(35) in tRNA(Tyr) = pseudouridine(35) in tRNA(Tyr). In terms of biological role, dual specificity enzyme that catalyzes the synthesis of pseudouridine from uracil-2604 in 23S ribosomal RNA and from uracil-35 in the anticodon of tRNA(Tyr). The chain is Dual-specificity RNA pseudouridine synthase RluF (rluF) from Escherichia coli O6:H1 (strain CFT073 / ATCC 700928 / UPEC).